The following is a 410-amino-acid chain: MRLLKTHPILGLANSYLIDSPQPSNISYMWNFGSLLGVCLIIQILTGVFLAMHYTPSVDLAFISVEHIMRDVNYGWLIRYLHANTASFFFIFVYLHIGRGLYYGSYKSPRTLLWSIGVIILVLMMAIAFLGFNGQKYMCFYNIDITIIQYLSIPTLITPSTRLKPILDKHNIKPVLLFENLTNSETKKIAYQALKPFSGIYMIVNLITEKYYVGSAVTGNLYMRFHKHLFSFTGNKRVANAVNKYGLSEFAFLVLEIVPQKDKIDSTLLLNREDYYLETLKPEYNIAPLASNSLGWKHSEESLAKMRENYSEERRQQVANINKGKTLSEETRELIRKSALLRKSMSSETRMKCAVNVQPVTIINLDGTNIMNFVSIKEASIAISCNEKTIRRALNGNGIVKKNYIVKVIK.

The COB exon 1 encoded stretch occupies residues 1–131; the sequence is MRLLKTHPIL…VLMMAIAFLG (131 aa). 3 consecutive transmembrane segments (helical) span residues 32-52, 75-95, and 112-132; these read FGSLLGVCLIIQILTGVFLAM, GWLIRYLHANTASFFFIFVYL, and LLWSIGVIILVLMMAIAFLGF. The COB intron 1 encoded stretch occupies residues 132–410; it reads FNGQKYMCFY…KKNYIVKVIK (279 aa). The 91-residue stretch at 196-286 folds into the GIY-YIG domain; that stretch reads PFSGIYMIVN…LETLKPEYNI (91 aa).

This sequence to endonucleases of group I introns of fungi and phage. The mature protein may arise from proteolytic cleavage of an in-frame translation of COB exon 1 plus intron 1, containing the bI1 open reading frame.

It is found in the mitochondrion. Its subcellular location is the membrane. Its function is as follows. Mitochondrial DNA endonuclease involved in intron homing. This Mycosarcoma maydis (Corn smut fungus) protein is Probable intron-encoded endonuclease bI1 (bI1).